A 710-amino-acid polypeptide reads, in one-letter code: Ephexin-1 (710 aa).

Basic and acidic residues-rich tracts occupy residues 1 to 11 (METRESEDLEK) and 26 to 41 (EPAK…KEET). The segment at 1-143 (METRESEDLE…PGNGATPEEW (143 aa)) is disordered. The tract at residues 1 to 273 (METRESEDLE…LEILQPEEIK (273 aa)) is regulatory region; modulates activity toward RHOA, RAC1 and CDC42. 2 stretches are compositionally biased toward polar residues: residues 89-102 (ADSQ…NEPL) and 127-136 (MSESSSTPGN). The residue at position 179 (Tyr179) is a Phosphotyrosine. Positions 194–236 (RRQQDAEIEDNTNGSPASEDTPEEEEEEEEEEEPASPPERKTL) are disordered. Positions 213–227 (DTPEEEEEEEEEEEP) are enriched in acidic residues. One can recognise a DH domain in the interval 273–457 (KLQEAMFELV…EMVVKACNEG (185 aa)). The region spanning 489 to 601 (WLLKQGELQQ…WMTSLAPNRR (113 aa)) is the PH domain. The SH3 domain occupies 612–673 (LDCPQVQCVH…PSSMTEEILN (62 aa)). Residues 687–699 (VHKMDDPQRSQNK) are compositionally biased toward basic and acidic residues. A disordered region spans residues 687-710 (VHKMDDPQRSQNKDRRKLGSRNRQ). Residues 700–710 (DRRKLGSRNRQ) are compositionally biased toward basic residues.

As to quaternary structure, interacts with CDK5R1 and EPHA4; activated by EPHA4 through the CDK5 kinase. In terms of processing, src-dependent phosphorylation at Tyr-179 upon EPHA4 activation increases the guanine exchange factor activity toward RHOA. Phosphorylation by CDK5 upon EPHA4 activation by EFNA1 may regulate dendritic spine morphogenesis. In terms of tissue distribution, highly expressed in brain specifically in caudate nucleus and to a lower extent in amygdala and hippocampus. Also detected in lung.

It is found in the cytoplasm. The protein resides in the membrane. The protein localises to the cell projection. It localises to the growth cone. Functionally, acts as a guanine nucleotide exchange factor (GEF) which differentially activates the GTPases RHOA, RAC1 and CDC42. Plays a role in axon guidance regulating ephrin-induced growth cone collapse and dendritic spine morphogenesis. Upon activation by ephrin through EPHA4, the GEF activity switches toward RHOA resulting in its activation. Activated RHOA promotes cone retraction at the expense of RAC1- and CDC42-stimulated growth cone extension. In Homo sapiens (Human), this protein is Ephexin-1 (NGEF).